A 449-amino-acid polypeptide reads, in one-letter code: NADH-quinone oxidoreductase subunit H (449 aa).

The next 9 membrane-spanning stretches (helical) occupy residues Trp23–Phe43, Ala93–Ile113, Val137–Gly157, Met176–Ser196, Leu209–Glu229, Ala258–Leu280, Tyr300–Leu320, Phe332–Ala352, and Leu368–Ala388. The segment covering Arg427–Thr442 has biased composition (polar residues). The tract at residues Arg427–Ile449 is disordered.

Belongs to the complex I subunit 1 family. As to quaternary structure, NDH-1 is composed of 14 different subunits. Subunits NuoA, H, J, K, L, M, N constitute the membrane sector of the complex.

The protein resides in the cell membrane. It catalyses the reaction a quinone + NADH + 5 H(+)(in) = a quinol + NAD(+) + 4 H(+)(out). Its function is as follows. NDH-1 shuttles electrons from NADH, via FMN and iron-sulfur (Fe-S) centers, to quinones in the respiratory chain. The immediate electron acceptor for the enzyme in this species is believed to be ubiquinone. Couples the redox reaction to proton translocation (for every two electrons transferred, four hydrogen ions are translocated across the cytoplasmic membrane), and thus conserves the redox energy in a proton gradient. This subunit may bind ubiquinone. This is NADH-quinone oxidoreductase subunit H from Nocardioides sp. (strain ATCC BAA-499 / JS614).